The primary structure comprises 241 residues: Homeobox protein TGIF2LX (241 aa).

2 disordered regions span residues 1-58 (MEAA…GNLP) and 127-207 (GKGA…ELVS). Over residues 10–39 (ETQSPVQKDSPAKTQSPAQDTSIMSRNNAD) the composition is skewed to polar residues. The segment at residues 48-111 (EHKKKRKGNL…INARRRILPD (64 aa)) is a DNA-binding region (homeobox; TALE-type).

This sequence belongs to the TALE/TGIF homeobox family.

Its subcellular location is the nucleus. In terms of biological role, may have a transcription role in testis. This Pan paniscus (Pygmy chimpanzee) protein is Homeobox protein TGIF2LX (TGIF2LX).